Here is a 176-residue protein sequence, read N- to C-terminus: NAD(P)H-quinone oxidoreductase subunit I, chloroplastic (176 aa).

4Fe-4S ferredoxin-type domains are found at residues 55-84 (GRIH…VNWE) and 95-124 (QTYS…MTEE). Residues Cys64, Cys67, Cys70, Cys74, Cys104, Cys107, Cys110, and Cys114 each coordinate [4Fe-4S] cluster.

Belongs to the complex I 23 kDa subunit family. As to quaternary structure, NDH is composed of at least 16 different subunits, 5 of which are encoded in the nucleus. Requires [4Fe-4S] cluster as cofactor.

Its subcellular location is the plastid. The protein resides in the chloroplast thylakoid membrane. The enzyme catalyses a plastoquinone + NADH + (n+1) H(+)(in) = a plastoquinol + NAD(+) + n H(+)(out). The catalysed reaction is a plastoquinone + NADPH + (n+1) H(+)(in) = a plastoquinol + NADP(+) + n H(+)(out). In terms of biological role, NDH shuttles electrons from NAD(P)H:plastoquinone, via FMN and iron-sulfur (Fe-S) centers, to quinones in the photosynthetic chain and possibly in a chloroplast respiratory chain. The immediate electron acceptor for the enzyme in this species is believed to be plastoquinone. Couples the redox reaction to proton translocation, and thus conserves the redox energy in a proton gradient. This Mesostigma viride (Green alga) protein is NAD(P)H-quinone oxidoreductase subunit I, chloroplastic.